The sequence spans 434 residues: ATP-dependent protease ATPase subunit HslU (434 aa).

ATP contacts are provided by residues valine 18, 60-65 (GVGKTE), aspartate 247, glutamate 312, and arginine 384.

Belongs to the ClpX chaperone family. HslU subfamily. In terms of assembly, a double ring-shaped homohexamer of HslV is capped on each side by a ring-shaped HslU homohexamer. The assembly of the HslU/HslV complex is dependent on binding of ATP.

The protein resides in the cytoplasm. In terms of biological role, ATPase subunit of a proteasome-like degradation complex; this subunit has chaperone activity. The binding of ATP and its subsequent hydrolysis by HslU are essential for unfolding of protein substrates subsequently hydrolyzed by HslV. HslU recognizes the N-terminal part of its protein substrates and unfolds these before they are guided to HslV for hydrolysis. This chain is ATP-dependent protease ATPase subunit HslU, found in Hyphomonas neptunium (strain ATCC 15444).